Reading from the N-terminus, the 3828-residue chain is Histone-lysine N-methyltransferase trithorax (3828 aa).

3 disordered regions span residues 25–179 (EDEA…AAAA), 356–390 (AVKS…ATKQ), and 512–589 (FRKQ…RSTR). Low complexity predominate over residues 29–57 (ASAAAAAAAATAATTEQHQQSEQSAGSSA). Residues 77–89 (AATSGNRGASSGA) show a composition bias toward polar residues. Positions 101–114 (GNGSSTGSKTTNGG) are enriched in low complexity. The span at 152–165 (DGTEDTNNDDDDDS) shows a compositional bias: acidic residues. Low complexity predominate over residues 359–387 (SSGSSPNPNHNPNAVAGSTSAAAPGAPTA). Residues 513 to 523 (RKQEPQHKTPE) are compositionally biased toward basic and acidic residues. Positions 524–553 (DNDDDGSASSDAIEDDEDIDDDDAEENEEA) are enriched in acidic residues. Residues 554 to 581 (ASEKSAETTASVDEKEADDRQLVMDKHF) show a composition bias toward basic and acidic residues. A DNA-binding region (nuclear receptor) is located at residues 725–839 (ASTCAVCSAP…AGHRSRLSAI (115 aa)). 3 disordered regions span residues 933 to 1036 (ESKE…SAVP), 1075 to 1094 (ELAA…TTSP), and 1131 to 1170 (AQPA…TTRN). The segment covering 960 to 974 (AKQDKEKARELEAEK) has biased composition (basic and acidic residues). 2 stretches are compositionally biased toward low complexity: residues 998–1022 (ASTT…TNSS) and 1078–1094 (AAEA…TTSP). Residues 1140 to 1170 (ESRSSKSNTQTEAKKTPATSGSSKGKVTTRN) show a composition bias toward polar residues. 3 consecutive PHD-type zinc fingers follow at residues 1251–1334 (RALC…CTVC), 1335–1380 (YTCN…CLKC), and 1408–1469 (GNFC…CARR). Residues 1483-1644 (AVMEEFKSSL…SEQFPWFQNE (162 aa)) form the Bromo domain. The C2HC pre-PHD-type zinc finger occupies 1708–1748 (TRVCLFCRKSGEGLSGEEARLLYCGHDCWVHINCAMWSAEV). The PHD-type 4 zinc finger occupies 1769–1816 (IKCTVCGNRGATVGCNVKSCGEHYHYPCARTIDCAFLTDKSMYCPAHA). The 58-residue stretch at 1856–1913 (KVQFHIGSVAVRQLGSIVPRFSDSFEAIVPINFLCSRLYWSSKEPWKIVEYTVRTTIQ) folds into the FYR N-terminal domain. Disordered stretches follow at residues 2252 to 2272 (CEPM…AQLS), 2464 to 2510 (AHQK…QQQQ), 2826 to 2848 (RNTN…PQQS), 2897 to 2973 (RQQQ…SPAA), 2988 to 3031 (APAP…QLSM), 3117 to 3178 (ASAN…VPAG), 3314 to 3338 (NGSG…DDDD), and 3457 to 3487 (KLDV…PMRD). Low complexity-rich tracts occupy residues 2253-2268 (EPMS…ATGT), 2483-2510 (QGQQ…QQQQ), and 2836-2848 (SVLS…PQQS). Positions 2897 to 2917 (RQQQANELKNKQAAGQQTGST) are enriched in polar residues. 4 stretches are compositionally biased toward low complexity: residues 2956–2973 (ATSA…SPAA), 2988–2997 (APAPQPQQQE), 3005–3031 (LHQQ…QLSM), and 3117–3132 (ASAN…QQNS). The segment covering 3148 to 3164 (QQRQEPTPLSNDVVVQS) has biased composition (polar residues). Over residues 3328 to 3338 (DDAEEDEDDDD) the composition is skewed to acidic residues. One can recognise an FYR C-terminal domain in the interval 3493-3577 (GPHLLYEIQS…EKCVKYTPKY (85 aa)). In terms of domain architecture, SET spans 3690–3806 (DYVGVFRSHI…QGEELTYDYK (117 aa)). S-adenosyl-L-methionine is bound by residues histidine 3700, arginine 3702, tyrosine 3744, and 3767-3768 (NH). Zn(2+) is bound by residues cysteine 3770, cysteine 3816, cysteine 3818, and cysteine 3823. The region spanning 3812–3828 (EKIPCSCGSKRCRKYLN) is the Post-SET domain.

This sequence belongs to the class V-like SAM-binding methyltransferase superfamily. Histone-lysine methyltransferase family. TRX/MLL subfamily. Interacts with ash1 via its SET domain.

It localises to the nucleus. It catalyses the reaction L-lysyl(9)-[histone H3] + 3 S-adenosyl-L-methionine = N(6),N(6),N(6)-trimethyl-L-lysyl(9)-[histone H3] + 3 S-adenosyl-L-homocysteine + 3 H(+). In terms of biological role, histone methyltransferase that methylates 'Lys-4' of histone H3 (H3K4me). H3K4me represents a specific tag for epigenetic transcriptional activation. Functions in segment determination through interaction with genes of bithorax (BX-C) and antennapedia (ANT-C) complexes. Acts as an activator of BX-C. Involved in the very early regulation of homeotic genes expressed only in the posterior region of the embryo. This chain is Histone-lysine N-methyltransferase trithorax (trx), found in Drosophila virilis (Fruit fly).